We begin with the raw amino-acid sequence, 318 residues long: tRNA-modifying protein YgfZ (318 aa).

Folate is bound by residues Trp24 and Trp185.

The protein belongs to the tRNA-modifying YgfZ family.

The protein resides in the cytoplasm. In terms of biological role, folate-binding protein involved in regulating the level of ATP-DnaA and in the modification of some tRNAs. It is probably a key factor in regulatory networks that act via tRNA modification, such as initiation of chromosomal replication. This is tRNA-modifying protein YgfZ from Buchnera aphidicola subsp. Baizongia pistaciae (strain Bp).